Consider the following 1295-residue polypeptide: Serine protease sat autotransporter (1295 aa).

Positions 1 to 49 (MNKIYSLKYSAATGGLIAVSELAKRVSGKTNRKLVATMLSLAVAGTVNA) are cleaved as a signal peptide. The 250-residue stretch at 51-300 (NIDISNVWAR…TKYNDKLVSE (250 aa)) folds into the Peptidase S6 domain. Active-site charge relay system residues include H121, D149, and S256. The Autotransporter domain occupies 1029-1295 (DINGESGAWA…AINANFRYSF (267 aa)).

Cleaved to release the mature protein from the outer membrane.

The protein localises to the periplasm. It is found in the secreted. It localises to the cell surface. Its subcellular location is the cell outer membrane. Inhibited by phenylmethylsulfonyl fluoride and Pefabloc. Shows serine protease activity and displays cytophatic activity, including elongation, rounding, and detachment of a proportion of the cells from monolayer in culture. Triggers vacuolation within the cytoplasm of the human bladder and kidney cells. The polypeptide is Serine protease sat autotransporter (sat) (Escherichia coli O6:H1 (strain CFT073 / ATCC 700928 / UPEC)).